A 1384-amino-acid polypeptide reads, in one-letter code: DNA-directed RNA polymerase subunit beta' (1384 aa).

Residues C81, C83, C96, and C99 each contribute to the Zn(2+) site. Mg(2+)-binding residues include D472, D474, and D476.

The protein belongs to the RNA polymerase beta' chain family. As to quaternary structure, the RNAP catalytic core consists of 2 alpha, 1 beta, 1 beta' and 1 omega subunit. When a sigma factor is associated with the core the holoenzyme is formed, which can initiate transcription. It depends on Mg(2+) as a cofactor. Zn(2+) serves as cofactor.

It catalyses the reaction RNA(n) + a ribonucleoside 5'-triphosphate = RNA(n+1) + diphosphate. In terms of biological role, DNA-dependent RNA polymerase catalyzes the transcription of DNA into RNA using the four ribonucleoside triphosphates as substrates. This Opitutus terrae (strain DSM 11246 / JCM 15787 / PB90-1) protein is DNA-directed RNA polymerase subunit beta'.